The following is a 243-amino-acid chain: Proteasome subunit beta (243 aa).

Basic and acidic residues-rich tracts occupy residues 1–11 (MRTPTHDEFSG) and 33–47 (NADR…KETK). Residues 1–49 (MRTPTHDEFSGRLDSLNGDRSNVFGPELGEFSNADRRADELGDKETKTG) constitute a propeptide, removed in mature form; by autocatalysis. The tract at residues 1-50 (MRTPTHDEFSGRLDSLNGDRSNVFGPELGEFSNADRRADELGDKETKTGT) is disordered. The active-site Nucleophile is threonine 50. Serine 129 carries the post-translational modification Phosphoserine.

It belongs to the peptidase T1B family. The 20S proteasome core is composed of 14 alpha and 14 beta subunits that assemble into four stacked heptameric rings, resulting in a barrel-shaped structure. The two inner rings, each composed of seven catalytic beta subunits, are sandwiched by two outer rings, each composed of seven alpha subunits. H.volcanii produces at least 2 types of 20S proteasomes: an alpha1-beta proteasome and a proteasome containing all three subunits (alpha1, alpha2, and beta) that appears to be asymmetrical with homo-oligomeric alpha1 and alpha2 rings positioned on separate ends. The catalytic chamber with the active sites is on the inside of the barrel. Has probably a gated structure, the ends of the cylinder being occluded by the N-termini of the alpha-subunits. Is likely capped at one or both ends by the proteasome regulatory ATPase, PAN.

The protein localises to the cytoplasm. It carries out the reaction Cleavage of peptide bonds with very broad specificity.. The formation of the proteasomal ATPase PAN-20S proteasome complex, via the docking of the C-termini of PAN into the intersubunit pockets in the alpha-rings, triggers opening of the gate for substrate entry. Interconversion between the open-gate and close-gate conformations leads to a dynamic regulation of the 20S proteasome proteolysis activity. In vitro, the chymotrypsin-like activity of the alpha1-beta proteasome is potently inhibited by carbobenzoxyl-leucinyl-leucinyl-leucinal-H (MG132) and significantly by N-acetyl-leucinyl-leucinyl-norleucinal-H (calpain inhibitor I). In terms of biological role, component of the proteasome core, a large protease complex with broad specificity involved in protein degradation. The H.volcanii alpha1-beta proteasome is able to cleave oligopeptides after Phe, Tyr and Trp, poorly after Glu but not after Arg. Thus, displays chymotrypsin-like activity, low caspase-like activity but no trypsin-like activity. This chain is Proteasome subunit beta, found in Haloferax volcanii (strain ATCC 29605 / DSM 3757 / JCM 8879 / NBRC 14742 / NCIMB 2012 / VKM B-1768 / DS2) (Halobacterium volcanii).